We begin with the raw amino-acid sequence, 135 residues long: ATP synthase epsilon chain (135 aa).

It belongs to the ATPase epsilon chain family. F-type ATPases have 2 components, CF(1) - the catalytic core - and CF(0) - the membrane proton channel. CF(1) has five subunits: alpha(3), beta(3), gamma(1), delta(1), epsilon(1). CF(0) has three main subunits: a, b and c.

Its subcellular location is the cell inner membrane. In terms of biological role, produces ATP from ADP in the presence of a proton gradient across the membrane. The chain is ATP synthase epsilon chain from Brucella suis (strain ATCC 23445 / NCTC 10510).